The primary structure comprises 456 residues: Phosphomethylpyrimidine synthase (456 aa).

Substrate contacts are provided by residues Asn-80, Met-109, Tyr-139, His-175, 195–197 (SRG), 236–239 (DSLR), and Glu-275. His-279 serves as a coordination point for Zn(2+). Position 302 (Tyr-302) interacts with substrate. Zn(2+) is bound at residue His-343. Positions 423, 426, and 431 each coordinate [4Fe-4S] cluster.

This sequence belongs to the ThiC family. Requires [4Fe-4S] cluster as cofactor.

The enzyme catalyses 5-amino-1-(5-phospho-beta-D-ribosyl)imidazole + S-adenosyl-L-methionine = 4-amino-2-methyl-5-(phosphooxymethyl)pyrimidine + CO + 5'-deoxyadenosine + formate + L-methionine + 3 H(+). The protein operates within cofactor biosynthesis; thiamine diphosphate biosynthesis. In terms of biological role, catalyzes the synthesis of the hydroxymethylpyrimidine phosphate (HMP-P) moiety of thiamine from aminoimidazole ribotide (AIR) in a radical S-adenosyl-L-methionine (SAM)-dependent reaction. The polypeptide is Phosphomethylpyrimidine synthase (Synechococcus elongatus (strain ATCC 33912 / PCC 7942 / FACHB-805) (Anacystis nidulans R2)).